Here is an 89-residue protein sequence, read N- to C-terminus: Small ribosomal subunit protein uS15 (89 aa).

This sequence belongs to the universal ribosomal protein uS15 family. In terms of assembly, part of the 30S ribosomal subunit. Forms a bridge to the 50S subunit in the 70S ribosome, contacting the 23S rRNA.

Functionally, one of the primary rRNA binding proteins, it binds directly to 16S rRNA where it helps nucleate assembly of the platform of the 30S subunit by binding and bridging several RNA helices of the 16S rRNA. In terms of biological role, forms an intersubunit bridge (bridge B4) with the 23S rRNA of the 50S subunit in the ribosome. The sequence is that of Small ribosomal subunit protein uS15 from Gloeothece citriformis (strain PCC 7424) (Cyanothece sp. (strain PCC 7424)).